The chain runs to 145 residues: Large ribosomal subunit protein uL16 (145 aa).

The protein belongs to the universal ribosomal protein uL16 family. Part of the 50S ribosomal subunit.

In terms of biological role, binds 23S rRNA and is also seen to make contacts with the A and possibly P site tRNAs. The sequence is that of Large ribosomal subunit protein uL16 from Lactobacillus johnsonii (strain CNCM I-12250 / La1 / NCC 533).